A 403-amino-acid chain; its full sequence is Pantothenate kinase (403 aa).

Phosphoserine occurs at positions 80, 82, and 84.

This sequence belongs to the type II pantothenate kinase family.

It localises to the cytoplasm. Its subcellular location is the nucleus. It catalyses the reaction (R)-pantothenate + ATP = (R)-4'-phosphopantothenate + ADP + H(+). It participates in cofactor biosynthesis; coenzyme A biosynthesis; CoA from (R)-pantothenate: step 1/5. With respect to regulation, regulated by feedback inhibition by malonyl-CoA. Functionally, plays a role in the physiological regulation of the intracellular CoA concentration. The chain is Pantothenate kinase from Schizosaccharomyces pombe (strain 972 / ATCC 24843) (Fission yeast).